Reading from the N-terminus, the 342-residue chain is Ion-translocating oxidoreductase complex subunit D (342 aa).

3 helical membrane passes run 42–62, 68–90, and 124–144; these read GSVI…ALFL, NIAF…LALP, and AMVG…QWLA. T171 is modified (FMN phosphoryl threonine). The next 5 helical transmembrane spans lie at 200–220, 227–247, 252–272, 286–306, and 308–328; these read FAGL…LYLI, WHIP…AWLI, FADP…FFIA, LVYA…GGYP, and AVAF…YYTQ.

Belongs to the NqrB/RnfD family. In terms of assembly, the complex is composed of six subunits: RnfA, RnfB, RnfC, RnfD, RnfE and RnfG. FMN is required as a cofactor.

Its subcellular location is the cell inner membrane. Functionally, part of a membrane-bound complex that couples electron transfer with translocation of ions across the membrane. This chain is Ion-translocating oxidoreductase complex subunit D, found in Alcanivorax borkumensis (strain ATCC 700651 / DSM 11573 / NCIMB 13689 / SK2).